We begin with the raw amino-acid sequence, 157 residues long: Transcriptional repressor NrdR (157 aa).

The segment at 1-22 is disordered; the sequence is MRCPKCGATKSSVIDSRQAEEG. A zinc finger lies at 3–34; it reads CPKCGATKSSVIDSRQAEEGNTIRRRRECDEC. Residues 49 to 139 enclose the ATP-cone domain; it reads LVVVKKDGTR…VYRSFKDVSE (91 aa).

Belongs to the NrdR family. Requires Zn(2+) as cofactor.

In terms of biological role, negatively regulates transcription of bacterial ribonucleotide reductase nrd genes and operons by binding to NrdR-boxes. The polypeptide is Transcriptional repressor NrdR (Streptococcus pneumoniae (strain Hungary19A-6)).